The sequence spans 318 residues: Porphobilinogen deaminase (318 aa).

Cys-241 is subject to S-(dipyrrolylmethanemethyl)cysteine.

It belongs to the HMBS family. As to quaternary structure, monomer. The cofactor is dipyrromethane.

The enzyme catalyses 4 porphobilinogen + H2O = hydroxymethylbilane + 4 NH4(+). It functions in the pathway porphyrin-containing compound metabolism; protoporphyrin-IX biosynthesis; coproporphyrinogen-III from 5-aminolevulinate: step 2/4. Tetrapolymerization of the monopyrrole PBG into the hydroxymethylbilane pre-uroporphyrinogen in several discrete steps. The chain is Porphobilinogen deaminase from Geobacter sp. (strain M21).